The sequence spans 412 residues: O-acetyl-L-homoserine sulfhydrylase 2 (412 aa).

Residue lysine 202 is modified to N6-(pyridoxal phosphate)lysine.

Belongs to the trans-sulfuration enzymes family. Homotetramer. Pyridoxal 5'-phosphate is required as a cofactor.

It catalyses the reaction O-acetyl-L-homoserine + hydrogen sulfide = L-homocysteine + acetate. Inhibited by the carbonyl reagents hydroxylamine and phenylhydrazine. Also inhibited by methionine and propargylglycine. In terms of biological role, catalyzes the conversion of O-acetyl-L-homoserine (OAH) into homocysteine in the methionine biosynthesis pathway. Has weak activity with O-acetyl-L-serine, O-phospho-L-serine, L-serine, O-succinyl-L-homoserine and L-homoserine. Shows a very low CTT gamma-synthase activity. This is O-acetyl-L-homoserine sulfhydrylase 2 from Thermus thermophilus (strain ATCC 27634 / DSM 579 / HB8).